We begin with the raw amino-acid sequence, 227 residues long: Cytochrome c oxidase subunit 2 (227 aa).

The Mitochondrial intermembrane portion of the chain corresponds to 1–14 (MAYPFQLGLQDATS). A helical membrane pass occupies residues 15–45 (PIMEELTNFHDHTLMIVFLISSLVLYLISLM). Residues 46 to 59 (LSTKLIHTSTMDAQ) lie on the Mitochondrial matrix side of the membrane. A helical membrane pass occupies residues 60-87 (EVETIWTILPAIILIMIALPSLRILYMM). The Mitochondrial intermembrane segment spans residues 88 to 227 (DEINNPALTV…LFENWSISMS (140 aa)). Cu cation-binding residues include histidine 161, cysteine 196, glutamate 198, cysteine 200, histidine 204, and methionine 207. Glutamate 198 lines the Mg(2+) pocket.

The protein belongs to the cytochrome c oxidase subunit 2 family. As to quaternary structure, component of the cytochrome c oxidase (complex IV, CIV), a multisubunit enzyme composed of 14 subunits. The complex is composed of a catalytic core of 3 subunits MT-CO1, MT-CO2 and MT-CO3, encoded in the mitochondrial DNA, and 11 supernumerary subunits COX4I, COX5A, COX5B, COX6A, COX6B, COX6C, COX7A, COX7B, COX7C, COX8 and NDUFA4, which are encoded in the nuclear genome. The complex exists as a monomer or a dimer and forms supercomplexes (SCs) in the inner mitochondrial membrane with NADH-ubiquinone oxidoreductase (complex I, CI) and ubiquinol-cytochrome c oxidoreductase (cytochrome b-c1 complex, complex III, CIII), resulting in different assemblies (supercomplex SCI(1)III(2)IV(1) and megacomplex MCI(2)III(2)IV(2)). Found in a complex with TMEM177, COA6, COX18, COX20, SCO1 and SCO2. Interacts with TMEM177 in a COX20-dependent manner. Interacts with COX20. Interacts with COX16. It depends on Cu cation as a cofactor.

Its subcellular location is the mitochondrion inner membrane. The enzyme catalyses 4 Fe(II)-[cytochrome c] + O2 + 8 H(+)(in) = 4 Fe(III)-[cytochrome c] + 2 H2O + 4 H(+)(out). Component of the cytochrome c oxidase, the last enzyme in the mitochondrial electron transport chain which drives oxidative phosphorylation. The respiratory chain contains 3 multisubunit complexes succinate dehydrogenase (complex II, CII), ubiquinol-cytochrome c oxidoreductase (cytochrome b-c1 complex, complex III, CIII) and cytochrome c oxidase (complex IV, CIV), that cooperate to transfer electrons derived from NADH and succinate to molecular oxygen, creating an electrochemical gradient over the inner membrane that drives transmembrane transport and the ATP synthase. Cytochrome c oxidase is the component of the respiratory chain that catalyzes the reduction of oxygen to water. Electrons originating from reduced cytochrome c in the intermembrane space (IMS) are transferred via the dinuclear copper A center (CU(A)) of subunit 2 and heme A of subunit 1 to the active site in subunit 1, a binuclear center (BNC) formed by heme A3 and copper B (CU(B)). The BNC reduces molecular oxygen to 2 water molecules using 4 electrons from cytochrome c in the IMS and 4 protons from the mitochondrial matrix. The sequence is that of Cytochrome c oxidase subunit 2 (MT-CO2) from Gerbilliscus robustus (Fringe-tailed gerbil).